A 302-amino-acid polypeptide reads, in one-letter code: Uricase (302 aa).

Active-site charge relay system residues include lysine 22 and threonine 67. 6 residues coordinate urate: threonine 67, aspartate 68, phenylalanine 163, arginine 180, glutamine 223, and asparagine 249. Histidine 251 serves as the catalytic Charge relay system.

The protein belongs to the uricase family. As to quaternary structure, homotetramer.

The enzyme catalyses urate + O2 + H2O = 5-hydroxyisourate + H2O2. Its pathway is purine metabolism; urate degradation; (S)-allantoin from urate: step 1/3. Functionally, catalyzes the oxidation of uric acid to 5-hydroxyisourate, which is further processed to form (S)-allantoin. The polypeptide is Uricase (uox) (Arthrobacter globiformis).